The sequence spans 987 residues: Pro-apoptotic serine protease NMA111 (987 aa).

Residues 1 to 29 form a disordered region; that stretch reads MPDIPTKRRLSNGSVIDNTNKRQMQSSFV. A compositionally biased stretch (polar residues) spans 11–28; sequence SNGSVIDNTNKRQMQSSF. The segment at 69-262 is serine protease; sequence VKSVVSIQFT…LPVYRPLRAL (194 aa). Active-site charge relay system residues include His110, Asp141, and Ser224. PDZ domains follow at residues 279–364 and 878–950; these read EWSL…VVIQ and PHHG…VSFD.

The protein belongs to the peptidase S1C family.

The protein localises to the nucleus. Its function is as follows. Nuclear serine protease which mediates apoptosis. The polypeptide is Pro-apoptotic serine protease NMA111 (NMA111) (Debaryomyces hansenii (strain ATCC 36239 / CBS 767 / BCRC 21394 / JCM 1990 / NBRC 0083 / IGC 2968) (Yeast)).